The primary structure comprises 238 residues: MGRKWNNIKEKKAQKDKNTSRIYAKFGKEIYVAAKSGEPNPESNQTLRLVLERAKTYSVPNHIIDRAIDKAKGAGDENYDHLRYEGFGPNGSMLIVDALTNNVNRTASDVRAAFGKNGGNMGVSGSVAYMFDHTATFGVEGKSVDEVLETLMEQDIDVRDVIDDNGLTIVYAEPDQFAQVQDALREAGVEEFKVAEFEMLPQTDIELSEEDQAIFEKLIDALEDLEDVQNVFHNVDLK.

It belongs to the TACO1 family. YeeN subfamily.

The protein localises to the cytoplasm. In Staphylococcus epidermidis (strain ATCC 35984 / DSM 28319 / BCRC 17069 / CCUG 31568 / BM 3577 / RP62A), this protein is Probable transcriptional regulatory protein SERP0322.